The following is a 485-amino-acid chain: D-alanine--D-alanyl carrier protein ligase (485 aa).

An ATP-binding site is contributed by 144-145 (TS). Residue D189 coordinates D-alanine. 284 to 289 (NTYGPT) is a binding site for ATP. V293 is a D-alanine binding site. Positions 365 and 473 each coordinate ATP. K473 contacts D-alanine.

It belongs to the ATP-dependent AMP-binding enzyme family. DltA subfamily.

Its subcellular location is the cytoplasm. The enzyme catalyses holo-[D-alanyl-carrier protein] + D-alanine + ATP = D-alanyl-[D-alanyl-carrier protein] + AMP + diphosphate. The protein operates within cell wall biogenesis; lipoteichoic acid biosynthesis. Functionally, catalyzes the first step in the D-alanylation of lipoteichoic acid (LTA), the activation of D-alanine and its transfer onto the D-alanyl carrier protein (Dcp) DltC. In an ATP-dependent two-step reaction, forms a high energy D-alanyl-AMP intermediate, followed by transfer of the D-alanyl residue as a thiol ester to the phosphopantheinyl prosthetic group of the Dcp. D-alanylation of LTA plays an important role in modulating the properties of the cell wall in Gram-positive bacteria, influencing the net charge of the cell wall. The polypeptide is D-alanine--D-alanyl carrier protein ligase (Staphylococcus haemolyticus (strain JCSC1435)).